Here is a 352-residue protein sequence, read N- to C-terminus: Thiamine-monophosphate kinase (352 aa).

Residues Asp-58, Thr-73, and Asp-75 each contribute to the Mg(2+) site. His-82 contacts substrate. Residues Asp-103 and Asp-151 each contribute to the Mg(2+) site. Residues 150–151 (GD) and Arg-177 contribute to the ATP site. Position 239 (Asp-239) interacts with Mg(2+). Position 241 (Ser-241) interacts with ATP. Asp-242 contributes to the Mg(2+) binding site. The substrate site is built by Asp-294 and Trp-349.

The protein belongs to the thiamine-monophosphate kinase family.

The catalysed reaction is thiamine phosphate + ATP = thiamine diphosphate + ADP. It participates in cofactor biosynthesis; thiamine diphosphate biosynthesis; thiamine diphosphate from thiamine phosphate: step 1/1. Functionally, catalyzes the ATP-dependent phosphorylation of thiamine-monophosphate (TMP) to form thiamine-pyrophosphate (TPP), the active form of vitamin B1. The polypeptide is Thiamine-monophosphate kinase (Caulobacter vibrioides (strain ATCC 19089 / CIP 103742 / CB 15) (Caulobacter crescentus)).